The following is a 124-amino-acid chain: Small ribosomal subunit protein uS12 (124 aa).

A disordered region spans residues 1–25 (MPTINQLIRKPRKSQKEKTASPALQ). Asp-89 is subject to 3-methylthioaspartic acid.

This sequence belongs to the universal ribosomal protein uS12 family. As to quaternary structure, part of the 30S ribosomal subunit. Contacts proteins S8 and S17. May interact with IF1 in the 30S initiation complex.

In terms of biological role, with S4 and S5 plays an important role in translational accuracy. Its function is as follows. Interacts with and stabilizes bases of the 16S rRNA that are involved in tRNA selection in the A site and with the mRNA backbone. Located at the interface of the 30S and 50S subunits, it traverses the body of the 30S subunit contacting proteins on the other side and probably holding the rRNA structure together. The combined cluster of proteins S8, S12 and S17 appears to hold together the shoulder and platform of the 30S subunit. This is Small ribosomal subunit protein uS12 from Borrelia duttonii (strain Ly).